The chain runs to 239 residues: Tetraspanin-9 (239 aa).

Residues 1–13 (MARGCLCCLKYMM) are Cytoplasmic-facing. Residues 14 to 34 (FLFNLIFWLCGCGLLGVGIWL) traverse the membrane as a helical segment. Residues 35-55 (SVSQGNFATFSPSFPSLSAAN) lie on the Extracellular side of the membrane. Residues 56 to 76 (LVIAIGTIVMVTGFLGCLGAI) traverse the membrane as a helical segment. Residues 77 to 85 (KENKCLLLS) lie on the Cytoplasmic side of the membrane. The helical transmembrane segment at 86–106 (FFIILLIILLAELILLILFFV) threads the bilayer. Over 107–203 (YMDKVNENAK…VKMWFDDNKH (97 aa)) the chain is Extracellular. N180 carries an N-linked (GlcNAc...) asparagine glycan. A helical membrane pass occupies residues 204–224 (VLGTIGMCILIIQILGMAFSM). At 225 to 239 (TLFQQIHRTGKKYDA) the chain is on the cytoplasmic side.

Belongs to the tetraspanin (TM4SF) family.

It is found in the membrane. This Xenopus tropicalis (Western clawed frog) protein is Tetraspanin-9 (tspan9).